Reading from the N-terminus, the 370-residue chain is Serine/threonine-protein kinase SAPK5 (370 aa).

Residues Tyr-4–Phe-260 form the Protein kinase domain. ATP contacts are provided by residues Ile-10–Ala-18 and Lys-33. Asp-123 acts as the Proton acceptor in catalysis. Positions Glu-312–Ser-370 are disordered. Acidic residues predominate over residues Thr-330–Tyr-349. Basic and acidic residues predominate over residues Asp-350–Val-360.

The protein belongs to the protein kinase superfamily. Ser/Thr protein kinase family. May be phosphorylated. Expressed in leaf blades, leaf sheaths and roots. Expressed in shoots and roots of young seedlings.

It localises to the cytoplasm. The protein localises to the nucleus. The enzyme catalyses L-seryl-[protein] + ATP = O-phospho-L-seryl-[protein] + ADP + H(+). The catalysed reaction is L-threonyl-[protein] + ATP = O-phospho-L-threonyl-[protein] + ADP + H(+). Activated by hyperosmotic stress. Its function is as follows. May play a role in signal transduction of hyperosmotic response. In Oryza sativa subsp. japonica (Rice), this protein is Serine/threonine-protein kinase SAPK5 (SAPK5).